Reading from the N-terminus, the 297-residue chain is uncharacterized protein (297 aa).

The tract at residues 1 to 44 is disordered; that stretch reads MQKSKSIFIPKAFAPQQQAQAPPSKLDNKDPSVEGEGASKPKDD. Over residues 10-23 the composition is skewed to low complexity; that stretch reads PKAFAPQQQAQAPP. Positions 26–44 are enriched in basic and acidic residues; the sequence is LDNKDPSVEGEGASKPKDD.

This is an uncharacterized protein from Invertebrate iridescent virus 3 (IIV-3).